The following is a 403-amino-acid chain: S-adenosylmethionine synthase (403 aa).

Histidine 17 lines the ATP pocket. Aspartate 19 lines the Mg(2+) pocket. Glutamate 45 lines the K(+) pocket. Glutamate 58 and glutamine 101 together coordinate L-methionine. The segment at 101–111 (QSPDIAMGVDR) is flexible loop. ATP is bound by residues 177–179 (DGK), 244–245 (RF), aspartate 253, 259–260 (RK), alanine 276, and lysine 280. Aspartate 253 lines the L-methionine pocket. Lysine 284 serves as a coordination point for L-methionine.

It belongs to the AdoMet synthase family. As to quaternary structure, homotetramer; dimer of dimers. It depends on Mg(2+) as a cofactor. K(+) is required as a cofactor.

Its subcellular location is the cytoplasm. It carries out the reaction L-methionine + ATP + H2O = S-adenosyl-L-methionine + phosphate + diphosphate. The protein operates within amino-acid biosynthesis; S-adenosyl-L-methionine biosynthesis; S-adenosyl-L-methionine from L-methionine: step 1/1. Its function is as follows. Catalyzes the formation of S-adenosylmethionine (AdoMet) from methionine and ATP. The overall synthetic reaction is composed of two sequential steps, AdoMet formation and the subsequent tripolyphosphate hydrolysis which occurs prior to release of AdoMet from the enzyme. The sequence is that of S-adenosylmethionine synthase from Geobacillus kaustophilus (strain HTA426).